Here is a 468-residue protein sequence, read N- to C-terminus: Phosphomethylpyrimidine synthase (468 aa).

Residues Asn80, Met109, Tyr138, His173, Ser193–Gly195, Asp234–Arg237, and Glu273 contribute to the substrate site. Position 277 (His277) interacts with Zn(2+). Substrate is bound at residue Tyr300. His341 contributes to the Zn(2+) binding site. Cys421, Cys424, and Cys429 together coordinate [4Fe-4S] cluster.

This sequence belongs to the ThiC family. In terms of assembly, homodimer. The cofactor is [4Fe-4S] cluster.

It catalyses the reaction 5-amino-1-(5-phospho-beta-D-ribosyl)imidazole + S-adenosyl-L-methionine = 4-amino-2-methyl-5-(phosphooxymethyl)pyrimidine + CO + 5'-deoxyadenosine + formate + L-methionine + 3 H(+). It participates in cofactor biosynthesis; thiamine diphosphate biosynthesis. In terms of biological role, catalyzes the synthesis of the hydroxymethylpyrimidine phosphate (HMP-P) moiety of thiamine from aminoimidazole ribotide (AIR) in a radical S-adenosyl-L-methionine (SAM)-dependent reaction. This is Phosphomethylpyrimidine synthase from Anaeromyxobacter sp. (strain Fw109-5).